The following is a 94-amino-acid chain: Protein translocase subunit SecE (94 aa).

Residues 1–32 (MTDAVGSIDMPDAQDEAPDSKKSRKGGKRGKK) form a disordered region. Positions 22-32 (KSRKGGKRGKK) are enriched in basic residues. Residues 65–85 (TVVIIFVVIMIGLVTLIDYGF) form a helical membrane-spanning segment.

This sequence belongs to the SecE/SEC61-gamma family. As to quaternary structure, component of the Sec protein translocase complex. Heterotrimer consisting of SecY, SecE and SecG subunits. The heterotrimers can form oligomers, although 1 heterotrimer is thought to be able to translocate proteins. Interacts with the ribosome. Interacts with SecDF, and other proteins may be involved. Interacts with SecA.

Its subcellular location is the cell membrane. Essential subunit of the Sec protein translocation channel SecYEG. Clamps together the 2 halves of SecY. May contact the channel plug during translocation. In Streptomyces coelicolor (strain ATCC BAA-471 / A3(2) / M145), this protein is Protein translocase subunit SecE.